Here is a 415-residue protein sequence, read N- to C-terminus: MDTKAFKRSLHKSEQYHRKGFGHEEEVTNLLQSEYNSKLIQQIRNNGYRLQQGDVTIHLAEAFGFCWGVERAIALAYETRRQFPQERIWITNEIIHNPSVNKNLRDMKVEFIPVQPDGQKDFTVVGQNDVVILPAFGASVQEMQLLHDKGCTIMDTTCPWVSKVWTSVEKHKKGSYTSIIHGKYKHEETIATSSFAGTYLVLLNLEEAEYVADYILNPGDTPSEREQRRADFMAKFANAHSPGFDPETDLERVGIANQTTMLKGETEQIGKLFERTVMRKYGPAQVNEHFLSFNTICDATQERQDAIFQLVDEPLDLMVVIGGFNSSNTTHLQEISIDKNIPSYHIDSVDRIGPGNRVEHKPLNADLTVTDNWLPNGPLAIGVTSGASTPDKVVSDIVEKIFSIKSASAEVVGVR.

Cysteine 66 lines the [4Fe-4S] cluster pocket. Histidine 96 contacts (2E)-4-hydroxy-3-methylbut-2-enyl diphosphate. Histidine 96 lines the dimethylallyl diphosphate pocket. Histidine 96 provides a ligand contact to isopentenyl diphosphate. Cysteine 158 is a [4Fe-4S] cluster binding site. Histidine 186 contacts (2E)-4-hydroxy-3-methylbut-2-enyl diphosphate. Histidine 186 contacts dimethylallyl diphosphate. Histidine 186 is a binding site for isopentenyl diphosphate. The active-site Proton donor is glutamate 188. Threonine 259 provides a ligand contact to (2E)-4-hydroxy-3-methylbut-2-enyl diphosphate. A [4Fe-4S] cluster-binding site is contributed by cysteine 297. Residues serine 326, serine 327, asparagine 328, and serine 388 each coordinate (2E)-4-hydroxy-3-methylbut-2-enyl diphosphate. Residues serine 326, serine 327, asparagine 328, and serine 388 each coordinate dimethylallyl diphosphate. Isopentenyl diphosphate is bound by residues serine 326, serine 327, asparagine 328, and serine 388.

This sequence belongs to the IspH family. The cofactor is [4Fe-4S] cluster.

It carries out the reaction isopentenyl diphosphate + 2 oxidized [2Fe-2S]-[ferredoxin] + H2O = (2E)-4-hydroxy-3-methylbut-2-enyl diphosphate + 2 reduced [2Fe-2S]-[ferredoxin] + 2 H(+). The catalysed reaction is dimethylallyl diphosphate + 2 oxidized [2Fe-2S]-[ferredoxin] + H2O = (2E)-4-hydroxy-3-methylbut-2-enyl diphosphate + 2 reduced [2Fe-2S]-[ferredoxin] + 2 H(+). It participates in isoprenoid biosynthesis; dimethylallyl diphosphate biosynthesis; dimethylallyl diphosphate from (2E)-4-hydroxy-3-methylbutenyl diphosphate: step 1/1. The protein operates within isoprenoid biosynthesis; isopentenyl diphosphate biosynthesis via DXP pathway; isopentenyl diphosphate from 1-deoxy-D-xylulose 5-phosphate: step 6/6. Catalyzes the conversion of 1-hydroxy-2-methyl-2-(E)-butenyl 4-diphosphate (HMBPP) into a mixture of isopentenyl diphosphate (IPP) and dimethylallyl diphosphate (DMAPP). Acts in the terminal step of the DOXP/MEP pathway for isoprenoid precursor biosynthesis. The sequence is that of 4-hydroxy-3-methylbut-2-enyl diphosphate reductase from Acaryochloris marina (strain MBIC 11017).